The primary structure comprises 227 residues: uncharacterized protein (227 aa).

2 helical membrane passes run 12 to 32 and 80 to 100; these read IVLFLIINILPILILGLYLYA and IILINGIYIGNHGSFGIKIPL.

The protein localises to the cell membrane. This is an uncharacterized protein from Methanocaldococcus jannaschii (strain ATCC 43067 / DSM 2661 / JAL-1 / JCM 10045 / NBRC 100440) (Methanococcus jannaschii).